The sequence spans 141 residues: Large ribosomal subunit protein uL11 (141 aa).

The protein belongs to the universal ribosomal protein uL11 family. As to quaternary structure, part of the ribosomal stalk of the 50S ribosomal subunit. Interacts with L10 and the large rRNA to form the base of the stalk. L10 forms an elongated spine to which L12 dimers bind in a sequential fashion forming a multimeric L10(L12)X complex. Post-translationally, one or more lysine residues are methylated.

In terms of biological role, forms part of the ribosomal stalk which helps the ribosome interact with GTP-bound translation factors. The sequence is that of Large ribosomal subunit protein uL11 from Thermotoga sp. (strain RQ2).